The sequence spans 720 residues: Engulfment and cell motility protein 3 (720 aa).

Positions 307–479 constitute an ELMO domain; that stretch reads EQRDQLQALR…VVREQLARTL (173 aa). Positions 542 to 664 constitute a PH domain; it reads RLCEGMLFRK…TDGLSALLGS (123 aa). Positions 696 to 706 match the SH3-binding motif; the sequence is PEQPPPVPPPP.

As to quaternary structure, probably interacts directly with the SH3-domain of DOCK1 via its SH3-binding site. Part of a complex with DOCK1 and RAC1. Interacts with ADGRB3.

The protein localises to the cytoplasm. Its function is as follows. Involved in cytoskeletal rearrangements required for phagocytosis of apoptotic cells and cell motility. Acts in association with DOCK1 and CRK. Was initially proposed to be required in complex with DOCK1 to activate Rac Rho small GTPases. May enhance the guanine nucleotide exchange factor (GEF) activity of DOCK1. The polypeptide is Engulfment and cell motility protein 3 (Elmo3) (Mus musculus (Mouse)).